Consider the following 185-residue polypeptide: Elongation factor P (185 aa).

The protein belongs to the elongation factor P family.

Its subcellular location is the cytoplasm. Its pathway is protein biosynthesis; polypeptide chain elongation. Its function is as follows. Involved in peptide bond synthesis. Stimulates efficient translation and peptide-bond synthesis on native or reconstituted 70S ribosomes in vitro. Probably functions indirectly by altering the affinity of the ribosome for aminoacyl-tRNA, thus increasing their reactivity as acceptors for peptidyl transferase. The polypeptide is Elongation factor P (Endomicrobium trichonymphae).